A 228-amino-acid chain; its full sequence is Ribonuclease H (228 aa).

One can recognise an RNase H type-1 domain in the interval 2–142 (GPMRTIVYAD…ADRLATLGRR (141 aa)). Mg(2+) contacts are provided by Asp-11, Glu-49, Asp-71, and Asp-134.

The protein belongs to the RNase H family. Monomer. It depends on Mg(2+) as a cofactor.

The protein resides in the cytoplasm. The catalysed reaction is Endonucleolytic cleavage to 5'-phosphomonoester.. Endonuclease that specifically degrades the RNA of RNA-DNA hybrids. In Methylorubrum extorquens (strain PA1) (Methylobacterium extorquens), this protein is Ribonuclease H.